An 89-amino-acid polypeptide reads, in one-letter code: Envelope glycoprotein N (89 aa).

Residues 1-24 form the signal peptide; the sequence is MAPGRGVLLLICLCLMDNVSQVVC. Topologically, residues 25-56 are virion surface; sequence SQNSTTPSKFPTFYSYDCNADTYAPQLTSFST. A helical membrane pass occupies residues 57-77; it reads IWTLLNVLVMTIACVIYLIYM. At 78-89 the chain is on the intravirion side; that stretch reads CFNKFVATMTNT.

The protein belongs to the herpesviridae glycoprotein N family. Interacts (via N-terminus) with gM (via N-terminus). The gM-gN heterodimer forms the gCII complex.

The protein localises to the virion membrane. The protein resides in the host membrane. It is found in the host Golgi apparatus. Its subcellular location is the host trans-Golgi network. Its function is as follows. Envelope glycoprotein necessary for proper maturation of gM and modulation of its membrane fusion activity. Also plays a critical role in virion morphogenesis. The chain is Envelope glycoprotein N from Equine herpesvirus 2 (strain 86/87) (EHV-2).